The sequence spans 259 residues: Putative protein phosphatase (259 aa).

The 248-residue stretch at 8-255 folds into the PPM-type phosphatase domain; sequence LFASLSKKGP…DNITLNLINL (248 aa).

The catalysed reaction is O-phospho-L-seryl-[protein] + H2O = L-seryl-[protein] + phosphate. The enzyme catalyses O-phospho-L-threonyl-[protein] + H2O = L-threonyl-[protein] + phosphate. This is Putative protein phosphatase from Mycoplasma pneumoniae (strain ATCC 29342 / M129 / Subtype 1) (Mycoplasmoides pneumoniae).